The sequence spans 381 residues: 8-amino-7-oxononanoate synthase (381 aa).

Arg27 is a substrate binding site. Position 105 to 106 (105 to 106 (GY)) interacts with pyridoxal 5'-phosphate. His130 is a binding site for substrate. Pyridoxal 5'-phosphate is bound by residues Ser176, 201–204 (DEAH), and 232–235 (TLSK). Position 235 is an N6-(pyridoxal phosphate)lysine (Lys235). Thr345 provides a ligand contact to substrate.

The protein belongs to the class-II pyridoxal-phosphate-dependent aminotransferase family. BioF subfamily. In terms of assembly, homodimer. Requires pyridoxal 5'-phosphate as cofactor.

The enzyme catalyses 6-carboxyhexanoyl-[ACP] + L-alanine + H(+) = (8S)-8-amino-7-oxononanoate + holo-[ACP] + CO2. The protein operates within cofactor biosynthesis; biotin biosynthesis. Catalyzes the decarboxylative condensation of pimeloyl-[acyl-carrier protein] and L-alanine to produce 8-amino-7-oxononanoate (AON), [acyl-carrier protein], and carbon dioxide. This chain is 8-amino-7-oxononanoate synthase, found in Mycolicibacterium paratuberculosis (strain ATCC BAA-968 / K-10) (Mycobacterium paratuberculosis).